We begin with the raw amino-acid sequence, 91 residues long: Acylphosphatase (91 aa).

Positions 4–91 constitute an Acylphosphatase-like domain; that stretch reads RYLIKVLGRV…DNEKSFKIVY (88 aa). Catalysis depends on residues Arg19 and Asn37.

It belongs to the acylphosphatase family.

The enzyme catalyses an acyl phosphate + H2O = a carboxylate + phosphate + H(+). The protein is Acylphosphatase (acyP) of Clostridium acetobutylicum (strain ATCC 824 / DSM 792 / JCM 1419 / IAM 19013 / LMG 5710 / NBRC 13948 / NRRL B-527 / VKM B-1787 / 2291 / W).